The sequence spans 333 residues: D-fructose 1,6-bisphosphatase class 2/sedoheptulose 1,7-bisphosphatase (333 aa).

Residues aspartate 33, glutamate 57, aspartate 85, and glutamate 88 each contribute to the Mn(2+) site. Substrate-binding positions include 88–90, tyrosine 119, 164–166, and 186–188; these read EGT, RAR, and DGD. Glutamate 213 contacts Mn(2+).

It belongs to the FBPase class 2 family. Homotetramer. Requires Mn(2+) as cofactor.

The catalysed reaction is beta-D-fructose 1,6-bisphosphate + H2O = beta-D-fructose 6-phosphate + phosphate. It catalyses the reaction D-sedoheptulose 1,7-bisphosphate + H2O = D-sedoheptulose 7-phosphate + phosphate. It functions in the pathway carbohydrate biosynthesis; Calvin cycle. In terms of biological role, catalyzes the hydrolysis of fructose 1,6-bisphosphate (Fru 1,6-P2) and sedoheptulose 1,7-bisphosphate (Sed 1,7-P2) to fructose 6-phosphate and sedoheptulose 7-phosphate, respectively. The polypeptide is D-fructose 1,6-bisphosphatase class 2/sedoheptulose 1,7-bisphosphatase (Prochlorococcus marinus (strain MIT 9515)).